The chain runs to 2271 residues: Serine-rich adhesin for platelets (2271 aa).

A signal peptide spans 1–89; sequence MSKRQKAFHD…VNMLHDQQAF (89 aa). The segment at 90–230 is serine-rich repeat region 1, SRR1; it reads AASDAPLTSE…KTSTTSTSTA (141 aa). Positions 100–111 are enriched in polar residues; that stretch reads LNTQSETVGNQN. Disordered regions lie at residues 100–229, 751–791, and 806–2243; these read LNTQ…STST, NSMS…VVST, and SVSA…GLLG. The span at 112–128 shows a compositional bias: low complexity; it reads STTIEASTSTADSTSVT. Residues 129-140 are compositionally biased toward polar residues; it reads KNSSSVQTSNSD. Residues 150-229 show a composition bias toward low complexity; it reads VTSTTNSTSN…NKTSTTSTST (80 aa). Residues 231–751 form a non-repeat region (NRR) region; it reads PVKLRTFSRL…TTFKYEVTRN (521 aa). Composition is skewed to low complexity over residues 752–791, 806–1392, and 1402–2214; these read SMSDSVSTSGSTQQSQSVSTSKADSQSASTSTSGSIVVST, SVSA…LSLS, and SNSA…ATSE. The tract at residues 752-2232 is serine-rich repeat region 2, SRR2; the sequence is SMSDSVSTSG…AQSEKRLPDT (1481 aa). An LPXTG sorting signal motif is present at residues 2229–2233; that stretch reads LPDTG. T2232 carries the post-translational modification Pentaglycyl murein peptidoglycan amidated threonine. Positions 2233–2271 are cleaved as a propeptide — removed by sortase; the sequence is GDSIKQNGLLGGVMTLLVGLGLMKRKKKKDENDQDDSQA.

Belongs to the serine-rich repeat protein (SRRP) family. In terms of processing, proteolytically cleaved by a metalloprotease. Post-translationally, glycosylated. It is probable that most of the Ser residues in SSR1 and SSR2 are O-GlcNAcylated. Sequential glycosylation by sugar transferases are able to generate complex sugar polymorphisms.

It localises to the secreted. The protein localises to the cell wall. Its function is as follows. Mediates binding to human platelets, possibly through a receptor-ligand interaction. Probably associated with virulence in endovascular infection. The sequence is that of Serine-rich adhesin for platelets (sraP) from Staphylococcus aureus (strain USA300).